Here is a 373-residue protein sequence, read N- to C-terminus: 4-hydroxy-3-methylbut-2-en-1-yl diphosphate synthase (flavodoxin) (373 aa).

4 residues coordinate [4Fe-4S] cluster: Cys-270, Cys-273, Cys-305, and Glu-312.

This sequence belongs to the IspG family. The cofactor is [4Fe-4S] cluster.

It catalyses the reaction (2E)-4-hydroxy-3-methylbut-2-enyl diphosphate + oxidized [flavodoxin] + H2O + 2 H(+) = 2-C-methyl-D-erythritol 2,4-cyclic diphosphate + reduced [flavodoxin]. Its pathway is isoprenoid biosynthesis; isopentenyl diphosphate biosynthesis via DXP pathway; isopentenyl diphosphate from 1-deoxy-D-xylulose 5-phosphate: step 5/6. In terms of biological role, converts 2C-methyl-D-erythritol 2,4-cyclodiphosphate (ME-2,4cPP) into 1-hydroxy-2-methyl-2-(E)-butenyl 4-diphosphate. In Klebsiella pneumoniae (strain 342), this protein is 4-hydroxy-3-methylbut-2-en-1-yl diphosphate synthase (flavodoxin).